The sequence spans 356 residues: Tyrosine recombinase XerS (356 aa).

The region spanning 16 to 121 is the Core-binding (CB) domain; the sequence is IMPWYVLDYY…ALSSLYKYLT (106 aa). Residues 169–354 form the Tyr recombinase domain; sequence AFLDYVDKEY…VNDEQKNALD (186 aa). Catalysis depends on residues Arg-210, Lys-234, His-306, Arg-309, and His-332. The O-(3'-phospho-DNA)-tyrosine intermediate role is filled by Tyr-341.

Belongs to the 'phage' integrase family. XerS subfamily.

Its subcellular location is the cytoplasm. FtsK is required for recombination. Its function is as follows. Site-specific tyrosine recombinase, which acts by catalyzing the cutting and rejoining of the recombining DNA molecules. Essential to convert dimers of the bacterial chromosome into monomers to permit their segregation at cell division. The polypeptide is Tyrosine recombinase XerS (Streptococcus pyogenes serotype M18 (strain MGAS8232)).